A 1282-amino-acid polypeptide reads, in one-letter code: Crescerin-like protein che-12 (1282 aa).

TOG regions lie at residues 33–240 (DFDT…EHTE) and 268–515 (PSLV…MDSF). HEAT repeat units follow at residues 59–96 (QKKG…TFGS), 100–137 (YCMC…LKPE), 162–209 (ELHH…FIGN), 261–300 (RLRF…QITP), 308–345 (PHLH…HLKG), 349–386 (AHIQ…NINP), 388–421 (TVGG…TISP), and 424–461 (FNLQ…LLNG). The tract at residues 566–714 (IQQQGQAEKP…RSFDDRPAKA (149 aa)) is disordered. Composition is skewed to low complexity over residues 575-592 (PSFS…HQAQ) and 633-644 (SAASNPNSSTSS). Over residues 702–712 (DPPRSFDDRPA) the composition is skewed to basic and acidic residues. 2 TOG regions span residues 800-1022 (NMSV…ANVE) and 1066-1282 (TELL…ALIR). 7 HEAT repeats span residues 838 to 875 (DNLK…NLNS), 879 to 917 (SEME…AATA), 919 to 953 (KALQ…IQGS), 961 to 998 (NALS…DPNF), 1095 to 1132 (ASDT…SMAK), 1177 to 1214 (IEPV…LAYK), and 1219 to 1258 (QVEV…LIGE).

Belongs to the Crescerin family. As to expression, detected in a subset of amphid neurons that lack wing- or finger-like ciliary extensions. Likewise, detected in phasmid neurons.

Its subcellular location is the cell projection. The protein localises to the cilium. The protein resides in the perikaryon. It localises to the dendrite. Required for normal structure and function of sensory cilia on amphid neurons, especially for the formation of distal ciliary structures, but is less important for normal assembly of middle and basal ciliary structures. Plays a role in the organization of axoneme microtubule bundles in sensory cilia. Required for normal structure and function of the ASER neuron that mediates attraction to NaCl. Required for normal chemotaxis to NaCl. Required for normal avoidance response to high osmolarity. In contrast, is not required for normal chemotaxis to isoamyl alcohol. Does not play a role in intraflagella transport (IFT). Promotes dauer formation in response to pheromones such as the ascarosides ascr#2, ascr#3, ascr#5, ascr#8 and icas#9. The polypeptide is Crescerin-like protein che-12 (Caenorhabditis elegans).